A 74-amino-acid chain; its full sequence is Large ribosomal subunit protein uL29 (74 aa).

The protein belongs to the universal ribosomal protein uL29 family.

The sequence is that of Large ribosomal subunit protein uL29 from Streptomyces griseus subsp. griseus (strain JCM 4626 / CBS 651.72 / NBRC 13350 / KCC S-0626 / ISP 5235).